Consider the following 138-residue polypeptide: Large ribosomal subunit protein uL14 (138 aa).

This sequence belongs to the universal ribosomal protein uL14 family. In terms of assembly, part of the 50S ribosomal subunit. Forms a cluster with proteins L3 and L24e, part of which may contact the 16S rRNA in 2 intersubunit bridges.

Binds to 23S rRNA. Forms part of two intersubunit bridges in the 70S ribosome. The sequence is that of Large ribosomal subunit protein uL14 from Sulfurisphaera tokodaii (strain DSM 16993 / JCM 10545 / NBRC 100140 / 7) (Sulfolobus tokodaii).